Here is a 395-residue protein sequence, read N- to C-terminus: Probable alcohol dehydrogenase EutG (395 aa).

NAD(+) is bound by residues Asp57, 116 to 120, 156 to 160, Lys178, and 197 to 201; these read GSVLD, TTAGT, and VTEGV. Residues Asp212, His216, His281, and His295 each coordinate Fe cation. Residues His295 and Asp354 each coordinate NAD(+).

Belongs to the iron-containing alcohol dehydrogenase family. Fe cation serves as cofactor.

The protein resides in the bacterial microcompartment. It catalyses the reaction ethanol + NAD(+) = acetaldehyde + NADH + H(+). The protein operates within amine and polyamine degradation; ethanolamine degradation. Its function is as follows. Probably acts on the acetaldehyde produced by the degradation of ethanolamine, producing ethanol. Functionally, expression of the eut operon allows this bacteria to use ethanolamine (EA) as a carbon, nitrogen and energy source. It relies on cobalamin (vitamin B12) both as a cofactor for the ethanolamine ammonia-lyase (EAL) activity and to induce the operon. EA enhances bacterial survival in macrophages in a concentration-dependent manner, suggesting it is an important nutrient during infection. This chain is Probable alcohol dehydrogenase EutG, found in Salmonella typhimurium (strain LT2 / SGSC1412 / ATCC 700720).